The following is a 400-amino-acid chain: Elongation factor Tu (400 aa).

In terms of domain architecture, tr-type G spans 10–209 (KPHVNIGTIG…EVDNYIPTPE (200 aa)). The segment at 19-26 (GHVDHGKT) is G1. 19-26 (GHVDHGKT) is a GTP binding site. Thr26 is a Mg(2+) binding site. The G2 stretch occupies residues 60–64 (GITIN). A G3 region spans residues 81-84 (DCPG). Residues 81–85 (DCPGH) and 136–139 (NKCD) each bind GTP. Residues 136–139 (NKCD) form a G4 region. The tract at residues 174 to 176 (SAL) is G5.

Belongs to the TRAFAC class translation factor GTPase superfamily. Classic translation factor GTPase family. EF-Tu/EF-1A subfamily. In terms of assembly, monomer.

It is found in the cytoplasm. It catalyses the reaction GTP + H2O = GDP + phosphate + H(+). Its function is as follows. GTP hydrolase that promotes the GTP-dependent binding of aminoacyl-tRNA to the A-site of ribosomes during protein biosynthesis. In Ruminiclostridium cellulolyticum (strain ATCC 35319 / DSM 5812 / JCM 6584 / H10) (Clostridium cellulolyticum), this protein is Elongation factor Tu.